Here is a 424-residue protein sequence, read N- to C-terminus: MAKQIQAIRGMNDILPTQSPIWQKLETVLRETVSAYGYSEIRTPIVESTDLFKRSIGEVTDIVEKEMYTFDDRNGDSLTLRPEGTASTVRAGNEHGLLYNQEQRLWYMGPMFRHERPQKGRYRQFHQFGVEVYGIPSADIDAEVLMLSAMLWEKLGITEHVTLELNTLGDSEERAAYRDALIAFLEQHKDVLDEDSQRRMYSNPLRVLDSKNAAVQALLADAPALMDYLGEETRSHFSHLCELLEAVGIQYTINPRLVRGLDYYNRTVFEWVTSSLGSQGTVLAGGRYDGLVGQLGGKSTPAVGFAMGLERIVLLLQTLELDKDIKPAVDVYVTAMGDSCRVEAIKVAQDLRASLPNLKVMSHCGGGNFKKQMKRADKSGAAVALVIGEDELANNQVAVKYLREDKAQELVARDALATYIAELV.

It belongs to the class-II aminoacyl-tRNA synthetase family. Homodimer.

Its subcellular location is the cytoplasm. It catalyses the reaction tRNA(His) + L-histidine + ATP = L-histidyl-tRNA(His) + AMP + diphosphate + H(+). This is Histidine--tRNA ligase from Shewanella piezotolerans (strain WP3 / JCM 13877).